Reading from the N-terminus, the 216-residue chain is TATA-box-binding protein-like 1 (216 aa).

2 tandem repeats follow at residues Lys38–Gly121 and Phe126–Gln210.

Belongs to the TBP family.

The protein localises to the nucleus. Functionally, TATA box-binding transcription factor. Members of the TBP family are differentially required to regulate transcription and development during early embryogenesis. This chain is TATA-box-binding protein-like 1 (trf1), found in Entamoeba histolytica (strain ATCC 30459 / HM-1:IMSS / ABRM).